Consider the following 283-residue polypeptide: D-alanine aminotransferase (283 aa).

Tyrosine 32 is a binding site for substrate. A pyridoxal 5'-phosphate-binding site is contributed by arginine 51. Substrate is bound by residues arginine 99 and histidine 101. The active-site Proton acceptor is lysine 146. Lysine 146 carries the post-translational modification N6-(pyridoxal phosphate)lysine. Residue glutamate 178 coordinates pyridoxal 5'-phosphate.

It belongs to the class-IV pyridoxal-phosphate-dependent aminotransferase family. Homodimer. It depends on pyridoxal 5'-phosphate as a cofactor.

The catalysed reaction is D-alanine + 2-oxoglutarate = D-glutamate + pyruvate. In terms of biological role, acts on the D-isomers of alanine, leucine, aspartate, glutamate, aminobutyrate, norvaline and asparagine. The enzyme transfers an amino group from a substrate D-amino acid to the pyridoxal phosphate cofactor to form pyridoxamine and an alpha-keto acid in the first half-reaction. The second half-reaction is the reverse of the first, transferring the amino group from the pyridoxamine to a second alpha-keto acid to form the product D-amino acid via a ping-pong mechanism. This is an important process in the formation of D-alanine and D-glutamate, which are essential bacterial cell wall components. The chain is D-alanine aminotransferase (dat) from Lysinibacillus sphaericus (Bacillus sphaericus).